A 209-amino-acid chain; its full sequence is Thymidylate kinase (209 aa).

Residue 13–20 (GLEGAGKS) coordinates ATP.

The protein belongs to the thymidylate kinase family.

It catalyses the reaction dTMP + ATP = dTDP + ADP. Phosphorylation of dTMP to form dTDP in both de novo and salvage pathways of dTTP synthesis. In Shewanella sp. (strain ANA-3), this protein is Thymidylate kinase.